The primary structure comprises 307 residues: tRNA pseudouridine synthase B (307 aa).

The active-site Nucleophile is the Asp41.

The protein belongs to the pseudouridine synthase TruB family. Type 1 subfamily.

The catalysed reaction is uridine(55) in tRNA = pseudouridine(55) in tRNA. Functionally, responsible for synthesis of pseudouridine from uracil-55 in the psi GC loop of transfer RNAs. The sequence is that of tRNA pseudouridine synthase B from Prochlorococcus marinus (strain AS9601).